Reading from the N-terminus, the 529-residue chain is Bifunctional purine biosynthesis protein PurH (529 aa).

An MGS-like domain is found at 1–148; sequence MQQRRPVRRA…KNHKDVAIVV (148 aa). N6-acetyllysine is present on Lys-287.

Belongs to the PurH family.

The enzyme catalyses (6R)-10-formyltetrahydrofolate + 5-amino-1-(5-phospho-beta-D-ribosyl)imidazole-4-carboxamide = 5-formamido-1-(5-phospho-D-ribosyl)imidazole-4-carboxamide + (6S)-5,6,7,8-tetrahydrofolate. It carries out the reaction IMP + H2O = 5-formamido-1-(5-phospho-D-ribosyl)imidazole-4-carboxamide. It functions in the pathway purine metabolism; IMP biosynthesis via de novo pathway; 5-formamido-1-(5-phospho-D-ribosyl)imidazole-4-carboxamide from 5-amino-1-(5-phospho-D-ribosyl)imidazole-4-carboxamide (10-formyl THF route): step 1/1. The protein operates within purine metabolism; IMP biosynthesis via de novo pathway; IMP from 5-formamido-1-(5-phospho-D-ribosyl)imidazole-4-carboxamide: step 1/1. The protein is Bifunctional purine biosynthesis protein PurH of Shigella dysenteriae serotype 1 (strain Sd197).